Consider the following 291-residue polypeptide: Acetyl-coenzyme A carboxylase carboxyl transferase subunit beta (291 aa).

Residues 23–291 enclose the CoA carboxyltransferase N-terminal domain; it reads VWHKCPSCTA…PPDLPVEESV (269 aa). Zn(2+) is bound by residues cysteine 27, cysteine 30, cysteine 46, and cysteine 49. The C4-type zinc finger occupies 27-49; it reads CPSCTAVLYRVELERNLEVCPKC.

It belongs to the AccD/PCCB family. As to quaternary structure, acetyl-CoA carboxylase is a heterohexamer composed of biotin carboxyl carrier protein (AccB), biotin carboxylase (AccC) and two subunits each of ACCase subunit alpha (AccA) and ACCase subunit beta (AccD). Zn(2+) is required as a cofactor.

It localises to the cytoplasm. It catalyses the reaction N(6)-carboxybiotinyl-L-lysyl-[protein] + acetyl-CoA = N(6)-biotinyl-L-lysyl-[protein] + malonyl-CoA. Its pathway is lipid metabolism; malonyl-CoA biosynthesis; malonyl-CoA from acetyl-CoA: step 1/1. Its function is as follows. Component of the acetyl coenzyme A carboxylase (ACC) complex. Biotin carboxylase (BC) catalyzes the carboxylation of biotin on its carrier protein (BCCP) and then the CO(2) group is transferred by the transcarboxylase to acetyl-CoA to form malonyl-CoA. This chain is Acetyl-coenzyme A carboxylase carboxyl transferase subunit beta, found in Coxiella burnetii (strain RSA 331 / Henzerling II).